Reading from the N-terminus, the 367-residue chain is Peptide chain release factor 2 (367 aa).

Glutamine 249 carries the N5-methylglutamine modification.

The protein belongs to the prokaryotic/mitochondrial release factor family. Post-translationally, methylated by PrmC. Methylation increases the termination efficiency of RF2.

Its subcellular location is the cytoplasm. Functionally, peptide chain release factor 2 directs the termination of translation in response to the peptide chain termination codons UGA and UAA. The protein is Peptide chain release factor 2 of Pseudothermotoga lettingae (strain ATCC BAA-301 / DSM 14385 / NBRC 107922 / TMO) (Thermotoga lettingae).